The chain runs to 452 residues: Zinc finger protein GAI-ASSOCIATED FACTOR 1 (452 aa).

Residues 1–32 (MPVDLDNSSTVSGEASVSISSTGNQNPLPNST) are compositionally biased toward polar residues. Residues 1–47 (MPVDLDNSSTVSGEASVSISSTGNQNPLPNSTGKKKRNLPGMPDPES) form a disordered region. Ser-53 bears the Phosphoserine mark. 2 consecutive C2H2-type zinc fingers follow at residues 63-85 (FVCEICNKGFQRDQNLQLHRRGH) and 104-134 (YVCPEVSCVHHDPSRALGDLTGIKKHFCRKH). A Nuclear localization signal motif is present at residues 126–133 (IKKHFCRK). The C2H2-type 2; degenerate zinc-finger motif lies at 139–162 (WKCDKCSKKYAVQSDWKAHSKICG). Positions 141, 144, 157, 161, 168, 170, 183, and 187 each coordinate Zn(2+). The CCHC-type 2; atypical zinc-finger motif lies at 166–189 (YKCDCGTLFSRRDSFITHRAFCDA). The tract at residues 176–188 (RRDSFITHRAFCD) is SHR-binding. A disordered region spans residues 196–254 (RSHHSQSKKQNPEILTRKNPVPNPVPAPVDTESAKIKSSSTLTIKQSESPKTPPEIVQE). Positions 231–245 (IKSSSTLTIKQSESP) are enriched in polar residues.

Interacts with the DELLA proteins (e.g. GAI/RGA2, RGA, RGL1, RGL2 and RGLG3), acting as coactivators and with TPR1 and TPR4, acting as a corepressors, at the promoter of GA20OX2 gene. In terms of tissue distribution, observed in vegetative tissues. Mainly expressed in hypocotyls, petioles, shoot apices, root tips, and trichomes, and, at low levels, in leaves, stems and flowers.

It is found in the nucleus. Transcription activation is repressed by gibberellic acid GA(3) in the presence of TPR4. In terms of biological role, transcription factor that acts as a positive regulator of gibberellin (GA) action, homeostasis and signaling. GA converts the GAF1 complex from transcriptional activator to repressor via the degradation of DELLA proteins. The chain is Zinc finger protein GAI-ASSOCIATED FACTOR 1 from Arabidopsis thaliana (Mouse-ear cress).